Reading from the N-terminus, the 277-residue chain is Shikimate dehydrogenase (NADP(+)) (277 aa).

Shikimate contacts are provided by residues 15 to 17 and Thr-62; that span reads SKS. Catalysis depends on Lys-66, which acts as the Proton acceptor. Glu-78 contacts NADP(+). Residues Asn-87 and Asp-103 each coordinate shikimate. NADP(+)-binding positions include 127-131, 151-156, and Gly-238; these read GAGGA and NRTHEK.

It belongs to the shikimate dehydrogenase family. As to quaternary structure, homodimer.

It catalyses the reaction shikimate + NADP(+) = 3-dehydroshikimate + NADPH + H(+). It functions in the pathway metabolic intermediate biosynthesis; chorismate biosynthesis; chorismate from D-erythrose 4-phosphate and phosphoenolpyruvate: step 4/7. Its function is as follows. Involved in the biosynthesis of the chorismate, which leads to the biosynthesis of aromatic amino acids. Catalyzes the reversible NADPH linked reduction of 3-dehydroshikimate (DHSA) to yield shikimate (SA). In Shewanella frigidimarina (strain NCIMB 400), this protein is Shikimate dehydrogenase (NADP(+)).